The chain runs to 554 residues: Solute carrier family 22 member 1 (554 aa).

Residues 1–21 are Cytoplasmic-facing; the sequence is MPTVDDVLEQVGEFGWFQKRT. The helical transmembrane segment at 22–42 threads the bilayer; sequence FLFLCLISAILAPIYLGIVFL. At 43-149 the chain is on the extracellular side; the sequence is GFTPDHRCRS…LVCADAWKVD (107 aa). N-linked (GlcNAc...) asparagine glycosylation is present at N71. Residues 150–170 form a helical membrane-spanning segment; sequence LFQSCVNLGFFLGSLGVGYIA. Over 171 to 176 the chain is Cytoplasmic; that stretch reads DRFGRK. The helical transmembrane segment at 177–197 threads the bilayer; it reads LCLLLTTLINAVSGVLTAVAP. Topologically, residues 198–206 are extracellular; that stretch reads DYTSMLLFR. Residues 207 to 229 form a helical membrane-spanning segment; it reads LLQGLVSKGSWMSGYTLITEFVG. Residues 230–237 lie on the Cytoplasmic side of the membrane; sequence SGYRRTVA. The helical transmembrane segment at 238–258 threads the bilayer; that stretch reads ILYQVAFSVGLVALSGVAYAI. Topologically, residues 259–262 are extracellular; that stretch reads PNWR. The chain crosses the membrane as a helical span at residues 263–283; sequence WLQLTVSLPTFLCLFYYWCVP. Residues 283 to 287 carry the Proline-rich sequence motif; the sequence is PESPR. The Cytoplasmic segment spans residues 284-347; sequence ESPRWLLSQK…FRTPNLRKHT (64 aa). At S333 the chain carries Phosphoserine. The chain crosses the membrane as a helical span at residues 348-368; it reads FILMFLWFTCSVLYQGLILHM. Over 369 to 374 the chain is Extracellular; sequence GATGGN. Residues 375–395 traverse the membrane as a helical segment; it reads VYLDFFYSSLVEFPAAFVILV. Residues 396–402 are Cytoplasmic-facing; it reads TIDRVGR. Residues 403–423 form a helical membrane-spanning segment; sequence IYPMAASNLAAGVASVILIFV. The Extracellular segment spans residues 424 to 431; it reads PQDLHWLT. Residues 432–452 traverse the membrane as a helical segment; the sequence is IVLSCVGRMGATIVLQMICLV. At 453 to 464 the chain is on the cytoplasmic side; that stretch reads NAELYPTFVRNL. The helical transmembrane segment at 465–485 threads the bilayer; that stretch reads GVMVCSALCDVGGIITPFMVF. Residues 486 to 492 lie on the Extracellular side of the membrane; sequence RLMEVWQ. The chain crosses the membrane as a helical span at residues 493-513; sequence PLPLIVFGVLGLLAGGMTLLL. Over 514–554 the chain is Cytoplasmic; sequence PETKGVALPETIEDAENLRRKAKPKESKIYLQVQTSELKGP.

This sequence belongs to the major facilitator (TC 2.A.1) superfamily. Organic cation transporter (TC 2.A.1.19) family. In terms of processing, phosphorylated. Expressed in kidney, liver and intestine.

The protein resides in the basolateral cell membrane. The protein localises to the apical cell membrane. Its subcellular location is the lateral cell membrane. It is found in the basal cell membrane. It catalyses the reaction 1-methylnicotinamide(out) = 1-methylnicotinamide(in). It carries out the reaction dopamine(out) = dopamine(in). The catalysed reaction is serotonin(out) = serotonin(in). The enzyme catalyses (R)-adrenaline(out) = (R)-adrenaline(in). It catalyses the reaction (R)-noradrenaline(out) = (R)-noradrenaline(in). It carries out the reaction histamine(out) = histamine(in). The catalysed reaction is guanidine(out) = guanidine(in). The enzyme catalyses choline(out) = choline(in). It catalyses the reaction acetylcholine(in) = acetylcholine(out). It carries out the reaction thiamine(in) = thiamine(out). The catalysed reaction is spermidine(in) = spermidine(out). The enzyme catalyses agmatine(out) = agmatine(in). It catalyses the reaction putrescine(out) = putrescine(in). It carries out the reaction (R)-carnitine(in) = (R)-carnitine(out). The catalysed reaction is O-isobutanoyl-(R)-carnitine(in) = O-isobutanoyl-(R)-carnitine(out). The enzyme catalyses O-acetyl-(R)-carnitine(in) = O-acetyl-(R)-carnitine(out). It catalyses the reaction O-3-hydroxybutanoyl-(R)-carnitine(in) = O-3-hydroxybutanoyl-(R)-carnitine(out). It carries out the reaction O-propanoyl-(R)-carnitine(in) = O-propanoyl-(R)-carnitine(out). The catalysed reaction is O-butanoyl-(R)-carnitine(in) = O-butanoyl-(R)-carnitine(out). The enzyme catalyses O-2-methylbutanoyl-(R)-carnitine(in) = O-2-methylbutanoyl-(R)-carnitine(out). It catalyses the reaction O-3-methylbutanoyl-(R)-carnitine(in) = O-3-methylbutanoyl-(R)-carnitine(out). It carries out the reaction O-hexanoyl-(R)-carnitine(in) = O-hexanoyl-(R)-carnitine(out). The catalysed reaction is L-histidyl-L-proline diketopiperazine(in) = L-histidyl-L-proline diketopiperazine(out). The enzyme catalyses (R)-salsolinol(in) = (R)-salsolinol(out). It catalyses the reaction prostaglandin F2alpha(out) = prostaglandin F2alpha(in). It carries out the reaction prostaglandin E2(out) = prostaglandin E2(in). With respect to regulation, phosphorylation of the transporter leads to changes in its substrate affinity, resulting in a regulation of the transport activity. In contrast with rat ortholog, ASP uptake is inhibited by protein kinase A (PKA) and C (PKC) activation. ASP uptake is also endogenously activated by calmodulin, the calmodulin-dependent kinase II and LCK tyrosine kinase. Inhibited by cGMP, most likely through a cGMP-binding protein that interacts with OCT1. Functionally, electrogenic voltage-dependent transporter that mediates the transport of a variety of organic cations such as endogenous bioactive amines, cationic drugs and xenobiotics. Functions as a pH- and Na(+)-independent, bidirectional transporter. Cation cellular uptake or release is driven by the electrochemical potential (i.e. membrane potential and concentration gradient) and substrate selectivity. Hydrophobicity is a major requirement for recognition in polyvalent substrates and inhibitors. Primarily expressed in the basolateral membrane of hepatocytes and proximal tubules and involved in the uptake and disposition of cationic compounds from the blood by hepatic and renal clearance. Most likely functions as an uptake carrier in enterocytes contributing to the intestinal elimination of organic cations from the systemic circulation. Transports endogenous monoamines such as N-1-methylnicotinamide (NMN), guanidine, neurotransmitters dopamine, serotonin, noradrenaline, adrenaline and histamine, and quaternary ammonium compound such as choline. Also transports natural polyamines such as spermidine, agmatine and putrescine at low affinity, but relatively high turnover. Involved in the hepatic and intestinal uptake of the vitamin B1/thiamine, hence regulating hepatic lipid and energy metabolism. Contributes to the influx and efflux of fatty acid carriers carnitines and acylcarnitines across the basolateral membrane of hepatocytes, from the liver to the systemic circulation and inversely and may be involved in regulating the systemic availability of hepatic acylcarnitines. Also capable of transporting non-amine endogenous compounds such as prostaglandin E2 (PGE2) and prostaglandin F2-alpha (PGF2-alpha). May contribute to the transport of cationic compounds in testes across the blood-testis-barrier. Also mediates the uptake of xenobiotics tributylmethylammonium (TBuMA), quinidine, N-methyl-quinine (NMQ), N-methyl-quinidine (NMQD) N-(4,4-azo-n-pentyl)-quinuclidine (APQ), azidoprocainamide methoiodide (AMP), N-(4,4-azo-n-pentyl)-21-deoxyajmalinium (APDA) and 4-(4-(dimethylamino)styryl)-N-methylpyridinium (ASP). This Oryctolagus cuniculus (Rabbit) protein is Solute carrier family 22 member 1 (SLC22A1).